The sequence spans 207 residues: Suppressor of IKBKE 1 (207 aa).

2 coiled-coil regions span residues His70–Glu102 and Cys164–Gln192.

The protein belongs to the SIKE family. As to quaternary structure, interacts with IKBKE and TBK1 via its coiled coil region. Interaction with TBK1 is disrupted upon viral infection or TLR3 stimulation. Interacts with CDC42BPB. Interacts with SIKE1 which mediates association with the STRIPAK core complex composed of PP2A catalytic and scaffolding subunits, the striatins (PP2A regulatory subunits), the striatin-associated proteins MOB4, STRIP1 and STRIP2, PDCD10 and members of the STE20 kinases, such as STK24 and STK26.

It is found in the cytoplasm. Physiological suppressor of IKK-epsilon and TBK1 that plays an inhibitory role in virus- and TLR3-triggered IRF3. Inhibits TLR3-mediated activation of interferon-stimulated response elements (ISRE) and the IFN-beta promoter. May act by disrupting the interactions of IKBKE or TBK1 with TICAM1/TRIF, IRF3 and RIGI. Does not inhibit NF-kappa-B activation pathways. Associates with the striatin-interacting phosphatase and kinase (STRIPAK) core complex, forming the extended (SIKE1:SLMAP)STRIPAK complex. The (SIKE1:SLMAP)STRIPAK complex dephosphorylates STK3 leading to the inhibition of Hippo signaling and the control of cell growth. This Mus musculus (Mouse) protein is Suppressor of IKBKE 1 (Sike1).